A 266-amino-acid chain; its full sequence is Undecaprenyl-diphosphatase (266 aa).

Helical transmembrane passes span 1-21 (MEFFKYIFYGIIQGLTEFIPI), 39-59 (PGSSVSAIIQIGSVFAIFWYF), 87-107 (IFIGTIPIVFIGVIIKLFVPG), 117-137 (LSIALVSILMSLIMLFADIST), 153-173 (YIGIAQAFAIVPGVSRSGATI), 189-209 (FSFLLGIPSISLAAFVEFFSA), 216-236 (FPFLPLFAGLITAFFSSLLAI), and 246-266 (HGLKIFVYYRLIFGILILFNL).

This sequence belongs to the UppP family.

The protein resides in the cell inner membrane. The catalysed reaction is di-trans,octa-cis-undecaprenyl diphosphate + H2O = di-trans,octa-cis-undecaprenyl phosphate + phosphate + H(+). Functionally, catalyzes the dephosphorylation of undecaprenyl diphosphate (UPP). Confers resistance to bacitracin. The chain is Undecaprenyl-diphosphatase from Prochlorococcus marinus subsp. pastoris (strain CCMP1986 / NIES-2087 / MED4).